A 512-amino-acid polypeptide reads, in one-letter code: 2-isopropylmalate synthase (512 aa).

Residues 5–268 form the Pyruvate carboxyltransferase domain; the sequence is LIIFDTTLRD…DIGIDTQQIL (264 aa). Mn(2+) contacts are provided by Asp-14, His-202, His-204, and Asn-239. The interval 394–512 is regulatory domain; sequence GFVSLSQHSE…SKADRVAAQG (119 aa).

The protein belongs to the alpha-IPM synthase/homocitrate synthase family. LeuA type 1 subfamily. Homodimer. It depends on Mn(2+) as a cofactor.

The protein localises to the cytoplasm. It carries out the reaction 3-methyl-2-oxobutanoate + acetyl-CoA + H2O = (2S)-2-isopropylmalate + CoA + H(+). It functions in the pathway amino-acid biosynthesis; L-leucine biosynthesis; L-leucine from 3-methyl-2-oxobutanoate: step 1/4. Its function is as follows. Catalyzes the condensation of the acetyl group of acetyl-CoA with 3-methyl-2-oxobutanoate (2-ketoisovalerate) to form 3-carboxy-3-hydroxy-4-methylpentanoate (2-isopropylmalate). The chain is 2-isopropylmalate synthase from Polaromonas naphthalenivorans (strain CJ2).